The following is a 790-amino-acid chain: Pentatricopeptide repeat-containing protein At1g25360 (790 aa).

16 PPR repeats span residues 48–82 (RAHI…DKIA), 84–109 (TTMV…APVC), 112–146 (DTVM…GFKP), 147–182 (DNFT…GAGY), 183–217 (ITSV…ILEK), 218–248 (DERS…MDDN), 250–284 (KLVA…GIEL), 285–315 (DEFT…VLRR), 319–349 (SFHF…MPAK), 350–384 (DLVS…NILS), 385–415 (WMIM…GFEP), 416–450 (CDYA…GFDS), 451–481 (SLSA…MPCL), 482–516 (DSVS…GIRP), 517–551 (DRIT…YRIP), and 553–583 (GADH…LPFK). Positions 588-663 (IWEALLSGCR…EVACSWIEME (76 aa)) are type E motif. The type E(+) motif stretch occupies residues 664–694 (TQVHTFLVDDTSHPEAEAVYIYLQDLGKEMR). Residues 695–790 (RLGYVPDTSF…NGECSCGNFW (96 aa)) are type DYW motif.

This sequence belongs to the PPR family. PCMP-H subfamily.

This chain is Pentatricopeptide repeat-containing protein At1g25360 (PCMP-H74), found in Arabidopsis thaliana (Mouse-ear cress).